We begin with the raw amino-acid sequence, 707 residues long: MSRFRILPLSIFLCFVSLFFCTESFTHQNGVVPSFDPSYSSPLLVKKDQRTSVVATEFGNISAVQIGDGYHIQFITLEPNALLLPLLLHSDMVFFVHTGTGILNWIDEESERKLELRRGDVFRLRSGTVFYVHSNEKLRVYAIFNVGKCLNDPCLGAYSSVRDLLLGFDDRTLRSAFAVPEDILRKIRDATKPPLIVNALPRNRTQGLEEDKWQSRLVRLFVSVEDVTDHLAMKPIVDTNKKKSRTFNVFEEDPDFENNNGRSIVVDEKDLDALKGSRFGVFMVNLTKGSMIGPHWNPSACEISIVLEGEGMVRVVNQQSLSSCKNDRKSESFMVEEGDVFVVPKFHPMAQMSFENSSFVFMGFSTSAKTNHPQFLVGQSSVLKVLDRDVVAVSFNLSNETIKGLLKAQKESVIFECASCAEGELSKLMREIEERKRREEEEIERRRKEEEEARKREEAKRREEEEAKRREEEETERKKREEEEARKREEERKREEEEAKRREEERKKREEEAEQARKREEEREKEEEMAKKREEERQRKEREEVERKRREEQERKRREEEARKREEERKREEEMAKRREQERQRKEREEVERKIREEQERKREEEMAKRREQERQKKEREEMERKKREEEARKREEEMAKIREEERQRKEREDVERKRREEEAMRREEERKREEEAAKRAEEERRKKEEEEEKRRWPPQPKPPEEI.

The first 24 residues, 1-24 (MSRFRILPLSIFLCFVSLFFCTES), serve as a signal peptide directing secretion. Positions 42–185 (PLLVKKDQRT…AFAVPEDILR (144 aa)) constitute a Cupin type-1 1 domain. N-linked (GlcNAc...) asparagine glycans are attached at residues N60, N203, N285, N356, N396, and N399. Residues 247-403 (FNVFEEDPDF…SFNLSNETIK (157 aa)) form the Cupin type-1 2 domain. Over residues 439-696 (EEEEIERRRK…KKEEEEEKRR (258 aa)) the composition is skewed to basic and acidic residues. The tract at residues 439–707 (EEEEIERRRK…PPQPKPPEEI (269 aa)) is disordered. The segment covering 698 to 707 (PPQPKPPEEI) has biased composition (pro residues).

It belongs to the 7S seed storage protein family.

In terms of biological role, seed storage protein. The chain is Vicilin-like seed storage protein At2g18540 from Arabidopsis thaliana (Mouse-ear cress).